The following is a 95-amino-acid chain: RING finger protein Z (95 aa).

Residue Gly-2 is the site of N-myristoyl glycine; by host attachment. The segment at 38–74 (CKSCWFANKGLLKCSNHYLCLKCLTLMLRRSDYCGIC) adopts an RING-type; atypical zinc-finger fold. Positions 88-91 (PSAP) match the PTAP/PSAP motif motif.

This sequence belongs to the arenaviridae Z protein family. Interacts with protein NP; this interaction probably directs the encapsidated genome to budding sites. Interacts (via RING domain) with polymerase L; this interaction inhibits viral transcription and replication, Z partially blocks the product exit tunnel for the releasing nascent RNA product. Interacts with the glycoprotein complex; this interaction plays a role in virion budding. Interacts with host eIF4E; this interaction results in eIF4E reduced affinity for its substrate, the 5'-m7 G cap structure. Interacts (via late-budding domain) with host TSG101; this interaction is essential for budding and release of viral particles. Interacts with host RPLP0; this interaction may serve to load ribosome-like particles inside the virion. Interacts with host PML; this interaction induces PML bodies redistribution in the cytoplasm upon viral infection. In terms of processing, myristoylation is required for the role of RING finger protein Z in assembly and budding.

The protein localises to the virion. Its subcellular location is the host cytoplasm. It is found in the host perinuclear region. It localises to the host cell membrane. Plays a crucial role in virion assembly and budding. Expressed late in the virus life cycle, it acts as an inhibitor of viral transcription and RNA synthesis by interacting with the viral polymerase L. Presumably recruits the NP encapsidated genome to cellular membranes at budding sites via direct interaction with NP. Plays critical roles in the final steps of viral release by interacting with host TSG101, a member of the vacuolar protein-sorting pathway and using other cellular host proteins involved in vesicle formation pathway. The budding of the virus progeny occurs after association of protein Z with the viral glycoprotein complex SSP-GP1-GP2 at the cell periphery, step that requires myristoylation of protein Z. Also selectively represses protein production by associating with host eIF4E. In cell-based minigenome assay, has an inhibitory effect on the ribonucleoprotein machinery (vRNP), which is responsible for the replication and transcription of the viral genome. This chain is RING finger protein Z, found in Neotoma (wood rats).